A 417-amino-acid chain; its full sequence is MFYKNDQIAGFDDSIWQAMEQEDKRQQDHVELIASENYTSARVMQAQGSQLTNKYAEGYPGKRYYGGCEHVDVIEQLAIDRAKELFGADYANVQPHSGSQANAAVFMALLKPGETVLGMSLAHGGHLTHGSKVSFSGKIYNAVQYGLNEVTGEIDYDEVARLAKEHQPKMIIAGFSAYSRVVDWQRFRDIADSIGAWLFVDMAHVAGLVAAGLYPNPVPIADVVTTTTHKTLRGPRGGLILAKQNDELAKKLNSAVFPAGQGGPLMHVIAAKAICFKEALGEGYVEYQQQVIDNAREMAKTFQTRGYNVVSGGTDNHLFLLDLIDKGITGKDADAALGRANITVNKNSVPNDPQSPFVTSGLRIGTPAITSRGFGLEEAAALTGWICDVLDDISNEQVIDDVRSKVLDLCEKNPVYR.

(6S)-5,6,7,8-tetrahydrofolate-binding positions include Leu121 and 125-127 (GHL). Lys230 bears the N6-(pyridoxal phosphate)lysine mark. A (6S)-5,6,7,8-tetrahydrofolate-binding site is contributed by 355 to 357 (SPF).

The protein belongs to the SHMT family. As to quaternary structure, homodimer. It depends on pyridoxal 5'-phosphate as a cofactor.

The protein resides in the cytoplasm. The enzyme catalyses (6R)-5,10-methylene-5,6,7,8-tetrahydrofolate + glycine + H2O = (6S)-5,6,7,8-tetrahydrofolate + L-serine. The protein operates within one-carbon metabolism; tetrahydrofolate interconversion. Its pathway is amino-acid biosynthesis; glycine biosynthesis; glycine from L-serine: step 1/1. Functionally, catalyzes the reversible interconversion of serine and glycine with tetrahydrofolate (THF) serving as the one-carbon carrier. This reaction serves as the major source of one-carbon groups required for the biosynthesis of purines, thymidylate, methionine, and other important biomolecules. Also exhibits THF-independent aldolase activity toward beta-hydroxyamino acids, producing glycine and aldehydes, via a retro-aldol mechanism. The sequence is that of Serine hydroxymethyltransferase 4 from Colwellia psychrerythraea (strain 34H / ATCC BAA-681) (Vibrio psychroerythus).